Here is an 87-residue protein sequence, read N- to C-terminus: Antitoxin RelB1 (87 aa).

Antitoxin component of a type II toxin-antitoxin (TA) system. Neutralizes the effect of cognate toxin RelE1, but no other RelE or ParE toxin. The chain is Antitoxin RelB1 (relB1) from Caulobacter vibrioides (strain ATCC 19089 / CIP 103742 / CB 15) (Caulobacter crescentus).